Here is a 239-residue protein sequence, read N- to C-terminus: tRNA (guanine-N(7)-)-methyltransferase (239 aa).

4 residues coordinate S-adenosyl-L-methionine: glutamate 69, glutamate 94, aspartate 121, and aspartate 144. Aspartate 144 is a catalytic residue. Lysine 148 is a binding site for substrate. The interval 150 to 155 is interaction with RNA; that stretch reads RHNKRR. Substrate contacts are provided by residues aspartate 180 and 217 to 220; that span reads TKFE.

It belongs to the class I-like SAM-binding methyltransferase superfamily. TrmB family. Monomer.

The catalysed reaction is guanosine(46) in tRNA + S-adenosyl-L-methionine = N(7)-methylguanosine(46) in tRNA + S-adenosyl-L-homocysteine. The protein operates within tRNA modification; N(7)-methylguanine-tRNA biosynthesis. Its function is as follows. Catalyzes the formation of N(7)-methylguanine at position 46 (m7G46) in tRNA. This is tRNA (guanine-N(7)-)-methyltransferase from Shigella dysenteriae serotype 1 (strain Sd197).